A 123-amino-acid polypeptide reads, in one-letter code: Small ribosomal subunit protein uS13 (123 aa).

The protein belongs to the universal ribosomal protein uS13 family. In terms of assembly, part of the 30S ribosomal subunit. Forms a loose heterodimer with protein S19. Forms two bridges to the 50S subunit in the 70S ribosome.

Its function is as follows. Located at the top of the head of the 30S subunit, it contacts several helices of the 16S rRNA. In the 70S ribosome it contacts the 23S rRNA (bridge B1a) and protein L5 of the 50S subunit (bridge B1b), connecting the 2 subunits; these bridges are implicated in subunit movement. Contacts the tRNAs in the A and P-sites. In Anaplasma marginale (strain St. Maries), this protein is Small ribosomal subunit protein uS13.